The sequence spans 634 residues: 3-dehydroshikimate dehydratase (634 aa).

The a divalent metal cation site is built by glutamate 134, aspartate 165, glutamine 191, and glutamate 239. 2 consecutive VOC domains span residues 295–414 (GIEF…LVER) and 440–590 (RVDH…VFTE). 3 residues coordinate Mg(2+): histidine 443, histidine 521, and glutamate 599.

It belongs to the bacterial two-domain DSD family. Homodimer. Co(2+) is required as a cofactor. The cofactor is Ni(2+). It depends on Mg(2+) as a cofactor. Requires Mn(2+) as cofactor.

The enzyme catalyses 3-dehydroshikimate = 3,4-dihydroxybenzoate + H2O. The protein operates within aromatic compound metabolism; 3,4-dihydroxybenzoate biosynthesis. Functionally, catalyzes the conversion of 3-dehydroshikimate to protocatechuate (3,4-dihydroxybenzoate), a common intermediate of quinate and shikimate degradation pathways. Is required for growth on either quinate or shikimate as a sole carbon source. In Pseudomonas aeruginosa (strain ATCC 15692 / DSM 22644 / CIP 104116 / JCM 14847 / LMG 12228 / 1C / PRS 101 / PAO1), this protein is 3-dehydroshikimate dehydratase.